An 86-amino-acid polypeptide reads, in one-letter code: Co-chaperonin GroES (86 aa).

This sequence belongs to the GroES chaperonin family. Heptamer of 7 subunits arranged in a ring. Interacts with the chaperonin GroEL.

It is found in the cytoplasm. Together with the chaperonin GroEL, plays an essential role in assisting protein folding. The GroEL-GroES system forms a nano-cage that allows encapsulation of the non-native substrate proteins and provides a physical environment optimized to promote and accelerate protein folding. GroES binds to the apical surface of the GroEL ring, thereby capping the opening of the GroEL channel. The protein is Co-chaperonin GroES of Campylobacter concisus (strain 13826).